The sequence spans 339 residues: Deubiquitinase and deneddylase Dub2 (339 aa).

A helical transmembrane segment spans residues 36-56 (IIIALFLIVISCGLILCAYTF). Active-site residues include His203, Asp220, and Cys282.

This sequence belongs to the peptidase C48 family.

The protein localises to the secreted. Its subcellular location is the host cell. It is found in the membrane. Its function is as follows. Effector proteins function to alter host cell physiology and promote bacterial survival in host tissues. This protease possesses deubiquitinating and deneddylating activities. The chain is Deubiquitinase and deneddylase Dub2 (cdu2) from Chlamydia trachomatis serovar L2 (strain ATCC VR-902B / DSM 19102 / 434/Bu).